The primary structure comprises 555 residues: Pyrophosphate--fructose 6-phosphate 1-phosphotransferase (555 aa).

Gly-82 is a binding site for diphosphate. A substrate-binding site is contributed by Arg-146. Mg(2+) is bound at residue Asp-176. Residues 204-206 (TID), 243-244 (KY), 251-253 (MGR), Glu-312, and 428-431 (YEGR) contribute to the substrate site. Asp-206 (proton acceptor) is an active-site residue.

This sequence belongs to the phosphofructokinase type A (PFKA) family. PPi-dependent PFK group II subfamily. Clade 'Long' sub-subfamily. In terms of assembly, homodimer. Requires Mg(2+) as cofactor.

The protein resides in the cytoplasm. The catalysed reaction is beta-D-fructose 6-phosphate + diphosphate = beta-D-fructose 1,6-bisphosphate + phosphate + H(+). The protein operates within carbohydrate degradation; glycolysis; D-glyceraldehyde 3-phosphate and glycerone phosphate from D-glucose: step 3/4. With respect to regulation, non-allosteric. Its function is as follows. Catalyzes the phosphorylation of D-fructose 6-phosphate, the first committing step of glycolysis. Uses inorganic phosphate (PPi) as phosphoryl donor instead of ATP like common ATP-dependent phosphofructokinases (ATP-PFKs), which renders the reaction reversible, and can thus function both in glycolysis and gluconeogenesis. Consistently, PPi-PFK can replace the enzymes of both the forward (ATP-PFK) and reverse (fructose-bisphosphatase (FBPase)) reactions. In Borreliella burgdorferi (strain ATCC 35210 / DSM 4680 / CIP 102532 / B31) (Borrelia burgdorferi), this protein is Pyrophosphate--fructose 6-phosphate 1-phosphotransferase.